We begin with the raw amino-acid sequence, 290 residues long: 33 kDa chaperonin (290 aa).

2 disulfide bridges follow: Cys235-Cys237 and Cys268-Cys271.

It belongs to the HSP33 family. In terms of processing, under oxidizing conditions two disulfide bonds are formed involving the reactive cysteines. Under reducing conditions zinc is bound to the reactive cysteines and the protein is inactive.

Its subcellular location is the cytoplasm. Functionally, redox regulated molecular chaperone. Protects both thermally unfolding and oxidatively damaged proteins from irreversible aggregation. Plays an important role in the bacterial defense system toward oxidative stress. This Streptococcus pyogenes serotype M4 (strain MGAS10750) protein is 33 kDa chaperonin.